We begin with the raw amino-acid sequence, 86 residues long: Sodium channel neurotoxin MeuNaTxalpha-5 (86 aa).

The N-terminal stretch at 1-19 (MNYLILISFALLVITGVES) is a signal peptide. Positions 21 to 85 (RDAYIAKPHN…VPIRIPGKCH (65 aa)) constitute an LCN-type CS-alpha/beta domain. 4 disulfides stabilise this stretch: cysteine 31-cysteine 84, cysteine 35-cysteine 57, cysteine 43-cysteine 67, and cysteine 47-cysteine 69. Arginine 86 is a propeptide (removed by a carboxypeptidase).

Belongs to the long (4 C-C) scorpion toxin superfamily. Sodium channel inhibitor family. Alpha subfamily. Expressed by the venom gland.

Its subcellular location is the secreted. In terms of biological role, alpha toxins bind voltage-independently at site-3 of sodium channels (Nav) and inhibit the inactivation of the activated channels, thereby blocking neuronal transmission. This toxin inhibits inactivation of Nav1.6/SCN8A (EC(50)=790 nM) and drosophila DmNav1 (EC(50)=280 nM). The toxin (1 uM) does not significantly shift the midpoint of activation at the two channels, but induces a significant depolarizing shift in the V(1/2) of inactivation of the channels. Has antimicrobial activity. The chain is Sodium channel neurotoxin MeuNaTxalpha-5 from Mesobuthus eupeus (Lesser Asian scorpion).